Consider the following 175-residue polypeptide: MAAKVYVGNLSWNTTDDSLAHAFSTYGQLTDYIVMKDRETGRSRGFGFVTFATQAEADAAIAALNEQELDGRRIRVNMANSRPAGGMGGGYGGVTGQYGANAYGAQGGYGGYGGQPGGFQQPGGFQQQGGYPQQGGYGGYQQPGFQPQQGGYGAPQQGYGAPQQGGYGGYNGQSQ.

The 79-residue stretch at 3–81 (AKVYVGNLSW…RRIRVNMANS (79 aa)) folds into the RRM domain. Residues 114-175 (GQPGGFQQPG…GYGGYNGQSQ (62 aa)) form a disordered region. A compositionally biased stretch (low complexity) spans 122–131 (PGGFQQQGGY). Residues 132–141 (PQQGGYGGYQ) are compositionally biased toward gly residues. Low complexity predominate over residues 142-162 (QPGFQPQQGGYGAPQQGYGAP). Residues 163–175 (QQGGYGGYNGQSQ) are compositionally biased toward gly residues.

It belongs to the glycine-rich RNA-binding protein family. As to quaternary structure, part of large ribonucleoprotein complexes (mRNPs) containing RNA-binding proteins RRM4 and PAB1, endosome-binding protein UPA1, core scaffold protein UPA2 and associated factor GRP1.

It is found in the endosome. In terms of biological role, component of endosomal mRNA transport that regulates polarity of the infectious hyphae by transporting a broad spectrum of cargo mRNAs from the nucleus to cell poles. The chain is Glycine-rich RNA-binding protein 1 from Mycosarcoma maydis (Corn smut fungus).